Here is a 607-residue protein sequence, read N- to C-terminus: Homologous recombination OB-fold protein (607 aa).

Disordered regions lie at residues 25 to 49 (LRPN…SYPA), 84 to 108 (ISSS…SGRQ), 196 to 308 (PWPS…TTVT), and 531 to 581 (LKPP…DDLD). Composition is skewed to polar residues over residues 27 to 49 (PNSS…SYPA) and 92 to 108 (QQRM…SGRQ). Ser30 is modified (phosphoserine). Arg281 carries the post-translational modification Asymmetric dimethylarginine. Residues 295–308 (SPFSTPRSTSTTVT) show a composition bias toward low complexity. A compositionally biased stretch (acidic residues) spans 570–581 (PEEELPEADDLD).

As to quaternary structure, interacts with MCM8; this interaction is necessary for MCM8-MCM9 helicase complex recruitment to DNA damage sites. Interacts with RPA1; this interaction associates HROB with the RPA complex.

It localises to the nucleus. It is found in the chromosome. Functionally, DNA-binding protein involved in homologous recombination that acts by recruiting the MCM8-MCM9 helicase complex to sites of DNA damage to promote DNA repair synthesis. This chain is Homologous recombination OB-fold protein, found in Rattus norvegicus (Rat).